Here is a 393-residue protein sequence, read N- to C-terminus: Ninja-family protein 1 (393 aa).

Disordered regions lie at residues 1 to 27 (MEGF…PGQL) and 155 to 200 (NDDW…KEMN). Over residues 156 to 170 (DDWKKRKEAQSLKRL) the composition is skewed to basic and acidic residues.

The protein belongs to the Ninja family.

The protein resides in the nucleus. The chain is Ninja-family protein 1 from Zea mays (Maize).